The sequence spans 359 residues: MLYWLYQYYGVNIFSYITFRAGVAFFVAFGLSVFFMPYFIKWAKAKKANQPISTYVAAHEGKKNTPTMGGIVFIISMICASLLCGNLFNPYVLLGLFCISCFALIGARDDYMKISAKNNAGMSAKMKFFLLFIVSLIITSILLYIGHNTNFYIPFMKYPLFDMGAFKIMDISVLALGFWVLVFLATSNAVNITDGLDGLATMPSICALFSLSAFVYVAGHAGFSSYLLYPKVVDSGELVILSVALIGALFGFLWYNCHPAQVFMGDSGSLALGAFIAFMAIVSNNEILLLLIGIIFVIEALSVILQVGSYKYRKKRIFAMAPIHHHFEVQGWAENKIIVRFWIIAILANIIALLSLKIR.

A run of 10 helical transmembrane segments spans residues 23–43 (VAFFVAFGLSVFFMPYFIKWA), 68–88 (MGGIVFIISMICASLLCGNLF), 92–112 (VLLGLFCISCFALIGARDDYM), 126–146 (MKFFLLFIVSLIITSILLYIG), 165–185 (AFKIMDISVLALGFWVLVFLA), 198–218 (GLATMPSICALFSLSAFVYVA), 235–255 (SGELVILSVALIGALFGFLWY), 262–282 (VFMGDSGSLALGAFIAFMAIV), 287–307 (ILLLLIGIIFVIEALSVILQV), and 336–356 (KIIVRFWIIAILANIIALLSL).

The protein belongs to the glycosyltransferase 4 family. MraY subfamily. Mg(2+) serves as cofactor.

Its subcellular location is the cell inner membrane. The catalysed reaction is UDP-N-acetyl-alpha-D-muramoyl-L-alanyl-gamma-D-glutamyl-meso-2,6-diaminopimeloyl-D-alanyl-D-alanine + di-trans,octa-cis-undecaprenyl phosphate = di-trans,octa-cis-undecaprenyl diphospho-N-acetyl-alpha-D-muramoyl-L-alanyl-D-glutamyl-meso-2,6-diaminopimeloyl-D-alanyl-D-alanine + UMP. It participates in cell wall biogenesis; peptidoglycan biosynthesis. Its function is as follows. Catalyzes the initial step of the lipid cycle reactions in the biosynthesis of the cell wall peptidoglycan: transfers peptidoglycan precursor phospho-MurNAc-pentapeptide from UDP-MurNAc-pentapeptide onto the lipid carrier undecaprenyl phosphate, yielding undecaprenyl-pyrophosphoryl-MurNAc-pentapeptide, known as lipid I. The protein is Phospho-N-acetylmuramoyl-pentapeptide-transferase of Helicobacter hepaticus (strain ATCC 51449 / 3B1).